The sequence spans 462 residues: MWDLKSEWWAVGFGLLLLLAASAQAGGLAPHHYTPDWPSLDSRPLPRWFDEAKFGLFVHWGVYSVPAWGSEWFWWHWQGEQSSAYVRFMKENYPPGFSYADFAPQFTARFFHPEEWADLFQAAGAKYVVLTAKHHEGFTNWPSAVSWNWNSKDVGPHRDLVGELGAAVRKRNIRYGLYHSLFEWFHPLYLLDKKNGLKTQHFVSTKTMPELYDLVNRYKPDLIWSDGEWECPDSYWNSTEFLAWLYNESPVKDQVVVNDRWGQNCSCRHGGYYNCEDKYRPHSLPDHKWEMCTSVDKASWGYRRDMSMSTIVDENEIIEELVQTISLGGNYLLNIGPNKDGVIVPIFQERLLAVGKWLQINGEAIYASKPWRVQSERNKTVVWYTTKDSAVYATFLHWPEDGVVNLQSPKMTSATKITMLGMEGELHWTQDPLEGVLITLPQLPPGTFPVESAWTLKLTKVN.

The signal sequence occupies residues 1–28 (MWDLKSEWWAVGFGLLLLLAASAQAGGL). N-linked (GlcNAc...) asparagine glycans are attached at residues asparagine 237, asparagine 264, and asparagine 378.

This sequence belongs to the glycosyl hydrolase 29 family. Homotetramer.

It is found in the lysosome. It catalyses the reaction an alpha-L-fucoside + H2O = L-fucose + an alcohol. It carries out the reaction a neolactoside IV(2)-alpha-Fuc-nLc4Cer(d18:1(4E)) + H2O = a neolactoside nLc4Cer(d18:1(4E)) + L-fucose. The enzyme catalyses a neolactoside IV(2)-alpha-Fuc-nLc4Cer(d18:0) + H2O = a neolactoside nLc4Cer(d18:0) + L-fucose. Its function is as follows. Alpha-L-fucosidase is responsible for hydrolyzing the alpha-1,6-linked fucose joined to the reducing-end N-acetylglucosamine of the carbohydrate moieties of glycoproteins. This is Tissue alpha-L-fucosidase (Fuca1) from Rattus norvegicus (Rat).